The sequence spans 443 residues: Major royal jelly protein 7 (443 aa).

Residues 1-17 (MTRWLFMVACLGIACQG) form the signal peptide. 4 N-linked (GlcNAc...) asparagine glycosylation sites follow: Asn145, Asn161, Asn178, and Asn321.

Belongs to the major royal jelly protein family. In terms of tissue distribution, found in and secreted from the hypopharyngeal glands of the worker honey bee (at protein level); expression peaks at 12 days post eclosion. Expressed in the brains of adult worker bees peaking at 12 days post eclosion (at protein level). Expressed in the spermatheca of adult queen bees (at protein level); Expression levels are higher in mated queens than in virgin queens.

It is found in the secreted. Component of royal jelly, a substance produced in the hypopharyngeal gland containing proteins, free amino acids, fatty acids, sugars and other nutrients, which is fed to developing larvae by worker nurse bees. All larvae are fed some royal jelly (also known as worker jelly) early in their development but it forms the principal source of nutrition for larvae destined to become queen bees. Produced in the spermatheca of adult queen bees, along with other major royal jelly proteins, where it may act as a nutrient supply for sperm stored by mated queens, or be involved in energy metabolism. The sequence is that of Major royal jelly protein 7 from Apis mellifera (Honeybee).